Consider the following 854-residue polypeptide: MARRDMAAETMDPRASTEPSPNEPREPARYDHAAVEPRWQRAWEEGETFRAVRSADPARGKRYVLDMFPYPSGSGLHVGHPEGYTATDIMSRYFRMRGIDVLHVMGWDAFGLPAEQHALETGTHPADTTARNIATFKRQLKMLGFSYDWSRELSTTDPRYVRWTQWIFLQLFKKGLAYQDEVSVNWCPALGTVLANEEVIDGKSERGSHPVYRTPLRQWMLRITAYADRLAEDLRLLDWPEGTVAMQRSWIGRSEGALITFEVKGWGKGALSVFTTRPDTLMGVTYVVLAPEHPLTTWLTSAESGASEPRREAVRAYVAAAAGKSDRERLAAAAREKTGVDTGLVAVHPITGVEVPIWVADYVLGGYGTGAVMAVPGHDERDFSFARTYGLPIVEVVSPDGSLHDQLEAAYVDPGVAVRSGEFDGLATEECKRAVIARLEALGRGKREVNYKLRDWVFSRQRYWGEPIPIYFPVELADPQGDPRKGAAHTIRYDQPIAVDEASLPIELPPLADFRPGDDPAGPLARAVDWRFFQRDGKWYARETNTMPQWAGSCWYYLRFLDPQNDAEPFSEAAYDAWMPVDLYVGGAEHGVLHLLYARFWHKVLYDLGHVKHPEPFAKLVHQGMILGEDNEKMSKSRGNVINPDDIVRAHGADVLRMYEMFMGPLEAVKPWQSGQIQGVVRFRDRVFATCTRPLSDAMDDATSRQLHRTIKKVTGDIEGMAFNTAISAMMVFVNHLSSLPSPPREAVLRLILLVSPFAPHLAEELWRLTGHERSLSYEPWPTYDEAFCVDDVLEIPVQVNGKVRGRVMLAKAASEEEARAAALGLETVAALAAGKQLKKFIYVAGKIVNIVVG.

The segment at 1–32 (MARRDMAAETMDPRASTEPSPNEPREPARYDH) is disordered. The span at 23–32 (EPREPARYDH) shows a compositional bias: basic and acidic residues. Positions 69–80 (PYPSGSGLHVGH) match the 'HIGH' region motif. The 'KMSKS' region signature appears at 633 to 637 (KMSKS). Lys-636 contributes to the ATP binding site.

Belongs to the class-I aminoacyl-tRNA synthetase family.

It localises to the cytoplasm. It catalyses the reaction tRNA(Leu) + L-leucine + ATP = L-leucyl-tRNA(Leu) + AMP + diphosphate. The sequence is that of Leucine--tRNA ligase from Sorangium cellulosum (strain So ce56) (Polyangium cellulosum (strain So ce56)).